The following is a 335-amino-acid chain: Glucokinase (335 aa).

Position 11 to 16 (11 to 16 (ADIGGT)) interacts with ATP.

Belongs to the bacterial glucokinase family.

The protein localises to the cytoplasm. It catalyses the reaction D-glucose + ATP = D-glucose 6-phosphate + ADP + H(+). The polypeptide is Glucokinase (Stenotrophomonas maltophilia (strain R551-3)).